The chain runs to 250 residues: MAIQDLLQSSLFIILIGVGIPIAAFLEILFRVILPKTKRVQTQQSPQNISQEQRFPTQQKPANDETSKYSSDSIEKALKDVLGKMDKKENELLTNITNSFNEMKKLIENLNSAVEELALSVKASESDSSSPFNTIIQQEEEHVSREISTVSQLVGSNNPNNVNLTWFIKSCVLLEIMEYDEEKIKQLYELGYVSSDDMFTILRILSFIKNRKITAKELASIAANIAESYSSLTPEIKKYIMILEGGGVNG.

The Extracellular segment spans residues 1-9; that stretch reads MAIQDLLQS. The helical transmembrane segment at 10–30 threads the bilayer; the sequence is SLFIILIGVGIPIAAFLEILF. Over 31–250 the chain is Cytoplasmic; the sequence is RVILPKTKRV…MILEGGGVNG (220 aa). The span at 42-61 shows a compositional bias: polar residues; sequence TQQSPQNISQEQRFPTQQKP. Positions 42–72 are disordered; sequence TQQSPQNISQEQRFPTQQKPANDETSKYSSD. The span at 62–72 shows a compositional bias: basic and acidic residues; sequence ANDETSKYSSD.

The S.acidocaldarius archaellum assembly machinery and its filament consist of seven proteins (FlaB, FlaF, FlaG, FlaH, FlaI, FlaJ and FlaX). FlaX assembles into ring-shaped oligomers. Interacts directly with FlaH and the motor ATPase FlaI.

The protein resides in the archaeal flagellum. It is found in the cell membrane. Its activity is regulated as follows. The presence of the flagellar core components FlaH, FlaI and FlaJ seems to be crucial for the stability of FlaX. Its function is as follows. Component of the archaellum. FlaX, FlaH and FlaI form the core cytoplasmic motor complex of the crenarchaeal archaellum. FlaX forms a ring that may act as a membrane-bound cytoplasmic scaffold that guides the assembly of the archaellum motor complex. Is essential for archaellum assembly. The protein is Archaeal flagellar motor scaffold protein FlaX of Sulfolobus acidocaldarius (strain ATCC 33909 / DSM 639 / JCM 8929 / NBRC 15157 / NCIMB 11770).